The following is a 21-amino-acid chain: Hemolymph 65 kDa lectin BG04 (21 aa).

In terms of tissue distribution, hemolymph.

The protein localises to the secreted. Its function is as follows. Binds and precipitates antigens of the parasite Echinostoma paraensei. This chain is Hemolymph 65 kDa lectin BG04 (BG04), found in Biomphalaria glabrata (Bloodfluke planorb).